The following is a 343-amino-acid chain: ATPase GET3 (343 aa).

32–39 (KGGVGKTT) is an ATP binding site. Residue aspartate 61 is part of the active site. ATP-binding residues include glutamate 245 and asparagine 272. Residues cysteine 283 and cysteine 286 each contribute to the Zn(2+) site.

It belongs to the arsA ATPase family. As to quaternary structure, homodimer.

The protein localises to the cytoplasm. It is found in the endoplasmic reticulum. ATPase required for the post-translational delivery of tail-anchored (TA) proteins to the endoplasmic reticulum. Recognizes and selectively binds the transmembrane domain of TA proteins in the cytosol. This complex then targets to the endoplasmic reticulum by membrane-bound receptors, where the tail-anchored protein is released for insertion. This process is regulated by ATP binding and hydrolysis. ATP binding drives the homodimer towards the closed dimer state, facilitating recognition of newly synthesized TA membrane proteins. ATP hydrolysis is required for insertion. Subsequently, the homodimer reverts towards the open dimer state, lowering its affinity for the membrane-bound receptor, and returning it to the cytosol to initiate a new round of targeting. The polypeptide is ATPase GET3 (Pyricularia oryzae (strain 70-15 / ATCC MYA-4617 / FGSC 8958) (Rice blast fungus)).